The chain runs to 366 residues: Glutamate 5-kinase (366 aa).

Lys17 lines the ATP pocket. Residues Ser57, Asp144, and Asn156 each coordinate substrate. ATP-binding positions include 176–177 (SD) and 216–222 (TGGMASK). The PUA domain occupies 278 to 352 (QGILHIDEGA…GKSTQELPAE (75 aa)).

Belongs to the glutamate 5-kinase family.

Its subcellular location is the cytoplasm. The catalysed reaction is L-glutamate + ATP = L-glutamyl 5-phosphate + ADP. It functions in the pathway amino-acid biosynthesis; L-proline biosynthesis; L-glutamate 5-semialdehyde from L-glutamate: step 1/2. Functionally, catalyzes the transfer of a phosphate group to glutamate to form L-glutamate 5-phosphate. In Rhodococcus jostii (strain RHA1), this protein is Glutamate 5-kinase.